The chain runs to 239 residues: Ribonuclease PH (239 aa).

Phosphate-binding positions include Arg86 and 124–126; that span reads GTR.

It belongs to the RNase PH family. In terms of assembly, homohexameric ring arranged as a trimer of dimers.

It catalyses the reaction tRNA(n+1) + phosphate = tRNA(n) + a ribonucleoside 5'-diphosphate. In terms of biological role, phosphorolytic 3'-5' exoribonuclease that plays an important role in tRNA 3'-end maturation. Removes nucleotide residues following the 3'-CCA terminus of tRNAs; can also add nucleotides to the ends of RNA molecules by using nucleoside diphosphates as substrates, but this may not be physiologically important. Probably plays a role in initiation of 16S rRNA degradation (leading to ribosome degradation) during starvation. In Marinomonas sp. (strain MWYL1), this protein is Ribonuclease PH.